A 436-amino-acid polypeptide reads, in one-letter code: MKFFQRPERRLKQWGLALLLAASALLPARADVVPLNHIVAVVNDEVITRQELAKRYDEVVRNLSRQNTPLPPRNVLEKQLLERMVTELALQQHARNTGVRADPTLVERALQRIAAQNKLDMAGLQAALEKEGQTLDGMRNTIRNELLIARARERDVDNRISVSDAEIDGYLQTQAQQGAETEYNFSHILVSVPENASPEQIRERRARAEDILAQLAAGADFAQLSASHSDAPDALKGGNFGWRASGKLPALFVEALKPMQPGEISPLLRSGNGFHILKLVDKRGLDATLSVTQTHARHILIKTNEITSEADARNRLLQLKERIDNGVKFDELARLHSEDASASKGGDLGWINPGDTVPDFEKAMNALQPGEVSAPVQSPFGWHLIQVLERRDQDVTQERQKLMARQAIRERKAEEAFQDWVRQIRDAAYVELRPID.

The first 30 residues, 1–30 (MKFFQRPERRLKQWGLALLLAASALLPARA), serve as a signal peptide directing secretion. PpiC domains follow at residues 180 to 281 (ETEY…KLVD) and 291 to 389 (VTQT…QVLE).

Its subcellular location is the periplasm. It carries out the reaction [protein]-peptidylproline (omega=180) = [protein]-peptidylproline (omega=0). Functionally, chaperone involved in the correct folding and assembly of outer membrane proteins. Recognizes specific patterns of aromatic residues and the orientation of their side chains, which are found more frequently in integral outer membrane proteins. May act in both early periplasmic and late outer membrane-associated steps of protein maturation. The sequence is that of Chaperone SurA from Thiobacillus denitrificans (strain ATCC 25259 / T1).